Here is a 178-residue protein sequence, read N- to C-terminus: Large ribosomal subunit protein uL6 (178 aa).

The protein belongs to the universal ribosomal protein uL6 family. In terms of assembly, part of the 50S ribosomal subunit.

Its function is as follows. This protein binds to the 23S rRNA, and is important in its secondary structure. It is located near the subunit interface in the base of the L7/L12 stalk, and near the tRNA binding site of the peptidyltransferase center. The sequence is that of Large ribosomal subunit protein uL6 from Thermoplasma acidophilum (strain ATCC 25905 / DSM 1728 / JCM 9062 / NBRC 15155 / AMRC-C165).